A 136-amino-acid polypeptide reads, in one-letter code: Large ribosomal subunit protein uL16c (136 aa).

The interval 1 to 20 is disordered; sequence MLSPKRTKFRKQHRGRMKGK.

It belongs to the universal ribosomal protein uL16 family. Part of the 50S ribosomal subunit.

It localises to the plastid. Its subcellular location is the chloroplast. In Brachypodium distachyon (Purple false brome), this protein is Large ribosomal subunit protein uL16c.